A 68-amino-acid chain; its full sequence is Amphipathic peptide OcyC1 (68 aa).

The N-terminal stretch at Met1 to Ala23 is a signal peptide. Phe36 carries the phenylalanine amide modification. A propeptide spanning residues Arg38–Arg68 is cleaved from the precursor.

It belongs to the non-disulfide-bridged peptide (NDBP) superfamily. Short antimicrobial peptide (group 4) family. Expressed by the venom gland.

It is found in the secreted. The protein resides in the target cell membrane. In terms of biological role, antimicrobial peptide. Inhibits the growth of Gram-positive and Gram-negative bacteria. Shows antifungal activity with MIC values ranging from 12.5 to 25 uM. Also shows an inhibitory activity on C.albicans biofilms at high concentrations. Shows low cytotoxic activity and has weak hemolytic activity. This chain is Amphipathic peptide OcyC1, found in Opisthacanthus cayaporum (South American scorpion).